The sequence spans 336 residues: tRNA N6-adenosine threonylcarbamoyltransferase (336 aa).

Fe cation contacts are provided by H114 and H118. Substrate-binding positions include 136–140, D169, G182, D186, and N275; that span reads LVSGG. D301 serves as a coordination point for Fe cation.

The protein belongs to the KAE1 / TsaD family. Fe(2+) is required as a cofactor.

The protein resides in the cytoplasm. The catalysed reaction is L-threonylcarbamoyladenylate + adenosine(37) in tRNA = N(6)-L-threonylcarbamoyladenosine(37) in tRNA + AMP + H(+). In terms of biological role, required for the formation of a threonylcarbamoyl group on adenosine at position 37 (t(6)A37) in tRNAs that read codons beginning with adenine. Is involved in the transfer of the threonylcarbamoyl moiety of threonylcarbamoyl-AMP (TC-AMP) to the N6 group of A37, together with TsaE and TsaB. TsaD likely plays a direct catalytic role in this reaction. The sequence is that of tRNA N6-adenosine threonylcarbamoyltransferase from Streptococcus pneumoniae (strain CGSP14).